Consider the following 308-residue polypeptide: Aspartate carbamoyltransferase catalytic subunit (308 aa).

Carbamoyl phosphate-binding residues include Arg-55 and Thr-56. Lys-83 is a binding site for L-aspartate. Carbamoyl phosphate-binding residues include Arg-105, His-133, and Gln-136. Positions 166 and 223 each coordinate L-aspartate. Residues Gly-264 and Pro-265 each contribute to the carbamoyl phosphate site.

The protein belongs to the aspartate/ornithine carbamoyltransferase superfamily. ATCase family. In terms of assembly, heterododecamer (2C3:3R2) of six catalytic PyrB chains organized as two trimers (C3), and six regulatory PyrI chains organized as three dimers (R2).

It carries out the reaction carbamoyl phosphate + L-aspartate = N-carbamoyl-L-aspartate + phosphate + H(+). It functions in the pathway pyrimidine metabolism; UMP biosynthesis via de novo pathway; (S)-dihydroorotate from bicarbonate: step 2/3. Functionally, catalyzes the condensation of carbamoyl phosphate and aspartate to form carbamoyl aspartate and inorganic phosphate, the committed step in the de novo pyrimidine nucleotide biosynthesis pathway. The chain is Aspartate carbamoyltransferase catalytic subunit from Salinispora arenicola (strain CNS-205).